The sequence spans 107 residues: Ferredoxin CarAc (107 aa).

The region spanning 6 to 102 is the Rieske domain; the sequence is LKVCAASDMQ…VEVKEGEVYV (97 aa). Residues Cys46, His48, Cys65, and His68 each coordinate [2Fe-2S] cluster.

Monomer. Carbazole 1,9a-dioxygenase complex consists of a terminal oxygenase component CarAa, a ferredoxin reductase component CarAd and a ferredoxin component CarAc. [2Fe-2S] cluster serves as cofactor.

Part of the multicomponent carbazole 1,9a-dioxygenase (CARDO), that converts carbazole (CAR) into 2-aminobiphenyl-2,3-diol. Acts as a mediator in the electron transfer from CarAd to CarAa. This chain is Ferredoxin CarAc (carAc), found in Metapseudomonas resinovorans (Pseudomonas resinovorans).